The chain runs to 646 residues: Long-chain fatty acid transport protein 1 (646 aa).

The Extracellular segment spans residues Met-1–Ser-13. A helical membrane pass occupies residues Leu-14–Val-34. Residues Tyr-35–Leu-646 are Cytoplasmic-facing. Positions Glu-191 to Lys-475 are sufficient for oligomerization. Tyr-246–Lys-257 serves as a coordination point for AMP.

This sequence belongs to the ATP-dependent AMP-binding enzyme family. As to quaternary structure, self-associates. May function as a homodimer. Interacts with EPRS1; mediates the translocation of SLC27A1 from the cytoplasm to the plasma membrane thereby increasing the uptake of long-chain fatty acids. Interacts with DGAT2 and this interaction is enhanced in the presence of ZFYVE1. As to expression, highest levels of expression are detected in muscle and adipose tissue small, intermediate levels in small intestine, and barely detectable in liver. Expressed in brain gray matter.

The protein resides in the cell membrane. It localises to the endomembrane system. Its subcellular location is the cytoplasm. The enzyme catalyses a fatty acid(in) = a fatty acid(out). The catalysed reaction is (9Z)-octadecenoate(out) = (9Z)-octadecenoate(in). It catalyses the reaction hexadecanoate(out) = hexadecanoate(in). It carries out the reaction (9Z,12Z)-octadecadienoate(out) = (9Z,12Z)-octadecadienoate(in). The enzyme catalyses (5Z,8Z,11Z,14Z)-eicosatetraenoate(out) = (5Z,8Z,11Z,14Z)-eicosatetraenoate(in). The catalysed reaction is a long-chain fatty acid + ATP + CoA = a long-chain fatty acyl-CoA + AMP + diphosphate. It catalyses the reaction (5Z,8Z,11Z,14Z)-eicosatetraenoate + ATP + CoA = (5Z,8Z,11Z,14Z)-eicosatetraenoyl-CoA + AMP + diphosphate. It carries out the reaction a very long-chain fatty acid + ATP + CoA = a very long-chain fatty acyl-CoA + AMP + diphosphate. The enzyme catalyses tetracosanoate + ATP + CoA = tetracosanoyl-CoA + AMP + diphosphate. Its activity is regulated as follows. Inhibited by Triacsin C. Functionally, mediates the import of long-chain fatty acids (LCFA) into the cell by facilitating their transport at the plasma membrane. Also functions as an acyl-CoA ligase catalyzing the ATP-dependent formation of fatty acyl-CoA using LCFA and very-long-chain fatty acids (VLCFA) as substrates, which prevents fatty acid efflux from cells and might drive more fatty acid uptake. May act directly as a bona fide transporter, or alternatively, in a cytoplasmic or membrane-associated multimeric protein complex to trap and draw fatty acids towards accumulation. Plays a pivotal role in regulating available LCFA substrates from exogenous sources in tissues undergoing high levels of beta-oxidation or triglyceride synthesis. May be involved in regulation of cholesterol metabolism. Probably involved in fatty acid transport across the blood barrier. In Homo sapiens (Human), this protein is Long-chain fatty acid transport protein 1.